The following is a 379-amino-acid chain: Putative FBD-associated F-box protein At5g38570 (379 aa).

The F-box domain occupies 1–47 (MDNINGLPDDLLVKILSFVPTYVAVSTCVLSKRWEFLWMWLPNLEFV). The region spanning 295 to 345 (CWNQPSSVLECLLSSLKILNWSAYFGRPQDRDIAVYILKNACHLKTATFLT) is the FBD domain.

This Arabidopsis thaliana (Mouse-ear cress) protein is Putative FBD-associated F-box protein At5g38570.